Here is a 266-residue protein sequence, read N- to C-terminus: Glucosamine-6-phosphate deaminase (266 aa).

The active-site Proton acceptor; for enolization step is Asp-72. Asp-141 (for ring-opening step) is an active-site residue. The active-site Proton acceptor; for ring-opening step is His-143. Glu-148 serves as the catalytic For ring-opening step.

The protein belongs to the glucosamine/galactosamine-6-phosphate isomerase family. NagB subfamily. As to quaternary structure, homohexamer.

It carries out the reaction alpha-D-glucosamine 6-phosphate + H2O = beta-D-fructose 6-phosphate + NH4(+). It participates in amino-sugar metabolism; N-acetylneuraminate degradation; D-fructose 6-phosphate from N-acetylneuraminate: step 5/5. With respect to regulation, allosterically activated by N-acetylglucosamine 6-phosphate (GlcNAc6P). Catalyzes the reversible isomerization-deamination of glucosamine 6-phosphate (GlcN6P) to form fructose 6-phosphate (Fru6P) and ammonium ion. The chain is Glucosamine-6-phosphate deaminase from Yersinia pestis bv. Antiqua (strain Antiqua).